The sequence spans 219 residues: 7-carboxy-7-deazaguanine synthase (219 aa).

Substrate-binding positions include 12–14 and R27; that span reads IQG. Residues 18–219 enclose the Radical SAM core domain; it reads YTGTPSIFIR…VQIHKYLKIR (202 aa). C31, C35, and C38 together coordinate [4Fe-4S] cluster. T40 contributes to the Mg(2+) binding site. Residue T92 coordinates substrate. Residues G94 and 136–138 each bind S-adenosyl-L-methionine; that span reads SPK.

The protein belongs to the radical SAM superfamily. 7-carboxy-7-deazaguanine synthase family. Homodimer. [4Fe-4S] cluster is required as a cofactor. The cofactor is S-adenosyl-L-methionine. Mg(2+) serves as cofactor.

The enzyme catalyses 6-carboxy-5,6,7,8-tetrahydropterin + H(+) = 7-carboxy-7-deazaguanine + NH4(+). It functions in the pathway purine metabolism; 7-cyano-7-deazaguanine biosynthesis. Catalyzes the complex heterocyclic radical-mediated conversion of 6-carboxy-5,6,7,8-tetrahydropterin (CPH4) to 7-carboxy-7-deazaguanine (CDG), a step common to the biosynthetic pathways of all 7-deazapurine-containing compounds. The protein is 7-carboxy-7-deazaguanine synthase of Buchnera aphidicola subsp. Schizaphis graminum (strain Sg).